Here is an 87-residue protein sequence, read N- to C-terminus: Phosphoribosyl-ATP pyrophosphatase (87 aa).

This sequence belongs to the PRA-PH family.

Its subcellular location is the cytoplasm. The enzyme catalyses 1-(5-phospho-beta-D-ribosyl)-ATP + H2O = 1-(5-phospho-beta-D-ribosyl)-5'-AMP + diphosphate + H(+). Its pathway is amino-acid biosynthesis; L-histidine biosynthesis; L-histidine from 5-phospho-alpha-D-ribose 1-diphosphate: step 2/9. The polypeptide is Phosphoribosyl-ATP pyrophosphatase (Arthrobacter sp. (strain FB24)).